The sequence spans 249 residues: Phosphate import ATP-binding protein PstB 1 (249 aa).

An ABC transporter domain is found at 4-244 (FNIENLDLFY…PKDDRTQGYV (241 aa)). 36-43 (GPSGCGKS) lines the ATP pocket.

The protein belongs to the ABC transporter superfamily. Phosphate importer (TC 3.A.1.7) family. The complex is composed of two ATP-binding proteins (PstB), two transmembrane proteins (PstC and PstA) and a solute-binding protein (PstS).

It localises to the cell inner membrane. The enzyme catalyses phosphate(out) + ATP + H2O = ADP + 2 phosphate(in) + H(+). Functionally, part of the ABC transporter complex PstSACB involved in phosphate import. Responsible for energy coupling to the transport system. In Aliivibrio fischeri (strain ATCC 700601 / ES114) (Vibrio fischeri), this protein is Phosphate import ATP-binding protein PstB 1.